The primary structure comprises 527 residues: Bifunctional purine biosynthesis protein PurH (527 aa).

The MGS-like domain occupies 1 to 149 (MASDFLPVRR…KNFARVAVAT (149 aa)).

It belongs to the PurH family.

The enzyme catalyses (6R)-10-formyltetrahydrofolate + 5-amino-1-(5-phospho-beta-D-ribosyl)imidazole-4-carboxamide = 5-formamido-1-(5-phospho-D-ribosyl)imidazole-4-carboxamide + (6S)-5,6,7,8-tetrahydrofolate. It catalyses the reaction IMP + H2O = 5-formamido-1-(5-phospho-D-ribosyl)imidazole-4-carboxamide. It functions in the pathway purine metabolism; IMP biosynthesis via de novo pathway; 5-formamido-1-(5-phospho-D-ribosyl)imidazole-4-carboxamide from 5-amino-1-(5-phospho-D-ribosyl)imidazole-4-carboxamide (10-formyl THF route): step 1/1. It participates in purine metabolism; IMP biosynthesis via de novo pathway; IMP from 5-formamido-1-(5-phospho-D-ribosyl)imidazole-4-carboxamide: step 1/1. The protein is Bifunctional purine biosynthesis protein PurH of Xanthomonas oryzae pv. oryzae (strain MAFF 311018).